The sequence spans 120 residues: Neuromedin-B (120 aa).

Positions 1–29 are cleaved as a signal peptide; sequence MSAVPLTRMLPLRFLTHLLLLSFIPLYFC. Positions 30–44 are excised as a propeptide; that stretch reads MEFSEDARNIEKIRR. Met54 carries the post-translational modification Methionine amide. Positions 58–120 are excised as a propeptide; the sequence is SLQDTYNPSE…MDDYIKTTQK (63 aa).

This sequence belongs to the bombesin/neuromedin-B/ranatensin family. As to expression, brain, intestine, and ovaries and early embryos (stages 2 and 10).

The protein localises to the secreted. Functionally, stimulates smooth muscle contraction. This chain is Neuromedin-B (nmb), found in Xenopus laevis (African clawed frog).